The following is a 357-amino-acid chain: Dual-specificity RNA methyltransferase RlmN (357 aa).

Glutamate 89 serves as the catalytic Proton acceptor. The region spanning 109-340 is the Radical SAM core domain; the sequence is EREKYTVCVS…CTIRESKALD (232 aa). Cysteine 116 and cysteine 345 are oxidised to a cystine. Residues cysteine 123, cysteine 127, and cysteine 130 each coordinate [4Fe-4S] cluster. Residues 173–174, serine 203, 226–228, and asparagine 302 each bind S-adenosyl-L-methionine; these read GE and SLH. Residue cysteine 345 is the S-methylcysteine intermediate of the active site.

This sequence belongs to the radical SAM superfamily. RlmN family. Requires [4Fe-4S] cluster as cofactor.

The protein resides in the cytoplasm. It catalyses the reaction adenosine(2503) in 23S rRNA + 2 reduced [2Fe-2S]-[ferredoxin] + 2 S-adenosyl-L-methionine = 2-methyladenosine(2503) in 23S rRNA + 5'-deoxyadenosine + L-methionine + 2 oxidized [2Fe-2S]-[ferredoxin] + S-adenosyl-L-homocysteine. The catalysed reaction is adenosine(37) in tRNA + 2 reduced [2Fe-2S]-[ferredoxin] + 2 S-adenosyl-L-methionine = 2-methyladenosine(37) in tRNA + 5'-deoxyadenosine + L-methionine + 2 oxidized [2Fe-2S]-[ferredoxin] + S-adenosyl-L-homocysteine. In terms of biological role, specifically methylates position 2 of adenine 2503 in 23S rRNA and position 2 of adenine 37 in tRNAs. m2A2503 modification seems to play a crucial role in the proofreading step occurring at the peptidyl transferase center and thus would serve to optimize ribosomal fidelity. In Helicobacter pylori (strain ATCC 700392 / 26695) (Campylobacter pylori), this protein is Dual-specificity RNA methyltransferase RlmN.